The chain runs to 1355 residues: DNA-directed RNA polymerase subunit beta' (1355 aa).

4 residues coordinate Zn(2+): Cys-219, Cys-293, Cys-300, and Cys-303. The tract at residues 1331 to 1355 (AEVEVDDEVDDDYEDDDEDDDDYED) is disordered.

It belongs to the RNA polymerase beta' chain family. RpoC2 subfamily. In terms of assembly, in cyanobacteria the RNAP catalytic core is composed of 2 alpha, 1 beta, 1 beta', 1 gamma and 1 omega subunit. When a sigma factor is associated with the core the holoenzyme is formed, which can initiate transcription. Zn(2+) is required as a cofactor.

The catalysed reaction is RNA(n) + a ribonucleoside 5'-triphosphate = RNA(n+1) + diphosphate. Its function is as follows. DNA-dependent RNA polymerase catalyzes the transcription of DNA into RNA using the four ribonucleoside triphosphates as substrates. The chain is DNA-directed RNA polymerase subunit beta' from Trichormus variabilis (strain ATCC 29413 / PCC 7937) (Anabaena variabilis).